We begin with the raw amino-acid sequence, 673 residues long: UvrABC system protein B (673 aa).

One can recognise a Helicase ATP-binding domain in the interval 26 to 414; the sequence is EGLEDGLAHQ…GGDVVDQVVR (389 aa). 39–46 contacts ATP; the sequence is GVTGSGKT. The Beta-hairpin signature appears at 92–115; sequence YYDYYQPEAYVPSSDTFIEKDASV. Positions 431–597 constitute a Helicase C-terminal domain; the sequence is QVDDLLSEIR…GLNKKVVDIL (167 aa). In terms of domain architecture, UVR spans 633–668; sequence LQKIHELEGLMMQHAQNLEFEEAAQIRDQLHQLREL.

It belongs to the UvrB family. As to quaternary structure, forms a heterotetramer with UvrA during the search for lesions. Interacts with UvrC in an incision complex.

It localises to the cytoplasm. The UvrABC repair system catalyzes the recognition and processing of DNA lesions. A damage recognition complex composed of 2 UvrA and 2 UvrB subunits scans DNA for abnormalities. Upon binding of the UvrA(2)B(2) complex to a putative damaged site, the DNA wraps around one UvrB monomer. DNA wrap is dependent on ATP binding by UvrB and probably causes local melting of the DNA helix, facilitating insertion of UvrB beta-hairpin between the DNA strands. Then UvrB probes one DNA strand for the presence of a lesion. If a lesion is found the UvrA subunits dissociate and the UvrB-DNA preincision complex is formed. This complex is subsequently bound by UvrC and the second UvrB is released. If no lesion is found, the DNA wraps around the other UvrB subunit that will check the other stand for damage. This Shigella dysenteriae serotype 1 (strain Sd197) protein is UvrABC system protein B.